Consider the following 235-residue polypeptide: tRNA (guanine-N(1)-)-methyltransferase (235 aa).

S-adenosyl-L-methionine-binding positions include Gly-112 and 132–137 (IGDYVI).

The protein belongs to the RNA methyltransferase TrmD family. In terms of assembly, homodimer.

It localises to the cytoplasm. The enzyme catalyses guanosine(37) in tRNA + S-adenosyl-L-methionine = N(1)-methylguanosine(37) in tRNA + S-adenosyl-L-homocysteine + H(+). Specifically methylates guanosine-37 in various tRNAs. This Anaplasma marginale (strain Florida) protein is tRNA (guanine-N(1)-)-methyltransferase.